A 468-amino-acid chain; its full sequence is Probable Xaa-Pro aminopeptidase pepP (468 aa).

Positions 264, 275, 398, and 438 each coordinate Mn(2+).

The protein belongs to the peptidase M24B family. The cofactor is Mn(2+).

The catalysed reaction is Release of any N-terminal amino acid, including proline, that is linked to proline, even from a dipeptide or tripeptide.. Functionally, catalyzes the removal of a penultimate prolyl residue from the N-termini of peptides. The protein is Probable Xaa-Pro aminopeptidase pepP (pepP) of Talaromyces stipitatus (strain ATCC 10500 / CBS 375.48 / QM 6759 / NRRL 1006) (Penicillium stipitatum).